Consider the following 31-residue polypeptide: Malate dehydrogenase, mitochondrial (31 aa).

NAD(+) contacts are provided by residues 9–19 (GIGQPLSLLMK) and 20–31 (DDLFNINAGIVK).

Belongs to the LDH/MDH superfamily. MDH type 1 family. As to quaternary structure, homodimer.

Its subcellular location is the mitochondrion matrix. The catalysed reaction is (S)-malate + NAD(+) = oxaloacetate + NADH + H(+). This Imperata cylindrica (Cogon grass) protein is Malate dehydrogenase, mitochondrial.